The sequence spans 184 residues: GMP synthase [glutamine-hydrolyzing] subunit A (184 aa).

A Glutamine amidotransferase type-1 domain is found at 3-184; it reads HIAVIDNHGQ…VFKNFIARCQ (182 aa). C75 acts as the Nucleophile in catalysis. Residues H163 and E165 contribute to the active site.

Heterodimer composed of a glutamine amidotransferase subunit (A) and a GMP-binding subunit (B).

It carries out the reaction XMP + L-glutamine + ATP + H2O = GMP + L-glutamate + AMP + diphosphate + 2 H(+). It functions in the pathway purine metabolism; GMP biosynthesis; GMP from XMP (L-Gln route): step 1/1. Catalyzes the synthesis of GMP from XMP. The protein is GMP synthase [glutamine-hydrolyzing] subunit A of Haloquadratum walsbyi (strain DSM 16790 / HBSQ001).